The primary structure comprises 249 residues: uncharacterized protein (249 aa).

A run of 2 helical transmembrane segments spans residues 49–69 (ILLS…CYLL) and 223–243 (IVMS…VHHL).

It localises to the cell membrane. This is an uncharacterized protein from Bacillus anthracis.